A 218-amino-acid chain; its full sequence is N-(5'-phosphoribosyl)anthranilate isomerase (218 aa).

It belongs to the TrpF family.

It carries out the reaction N-(5-phospho-beta-D-ribosyl)anthranilate = 1-(2-carboxyphenylamino)-1-deoxy-D-ribulose 5-phosphate. Its pathway is amino-acid biosynthesis; L-tryptophan biosynthesis; L-tryptophan from chorismate: step 3/5. The chain is N-(5'-phosphoribosyl)anthranilate isomerase from Chelativorans sp. (strain BNC1).